A 125-amino-acid polypeptide reads, in one-letter code: Small ribosomal subunit protein uS12 (125 aa).

Asp89 carries the post-translational modification 3-methylthioaspartic acid. The interval 105-125 (AGVKDRKQARSKYGAKRPKAA) is disordered. Residues 113 to 125 (ARSKYGAKRPKAA) are compositionally biased toward basic residues.

This sequence belongs to the universal ribosomal protein uS12 family. As to quaternary structure, part of the 30S ribosomal subunit. Contacts proteins S8 and S17. May interact with IF1 in the 30S initiation complex.

Functionally, with S4 and S5 plays an important role in translational accuracy. Interacts with and stabilizes bases of the 16S rRNA that are involved in tRNA selection in the A site and with the mRNA backbone. Located at the interface of the 30S and 50S subunits, it traverses the body of the 30S subunit contacting proteins on the other side and probably holding the rRNA structure together. The combined cluster of proteins S8, S12 and S17 appears to hold together the shoulder and platform of the 30S subunit. The protein is Small ribosomal subunit protein uS12 of Methylobacillus flagellatus (strain ATCC 51484 / DSM 6875 / VKM B-1610 / KT).